Consider the following 135-residue polypeptide: Ribonuclease VapC9 (135 aa).

Positions V15–I118 constitute a PINc domain. D17 and D88 together coordinate Mg(2+).

Belongs to the PINc/VapC protein family. Dimer. Mg(2+) serves as cofactor.

Functionally, toxic component of a type II toxin-antitoxin (TA) system. An RNase. The polypeptide is Ribonuclease VapC9 (Archaeoglobus fulgidus (strain ATCC 49558 / DSM 4304 / JCM 9628 / NBRC 100126 / VC-16)).